We begin with the raw amino-acid sequence, 600 residues long: Sulfite reductase [NADPH] flavoprotein alpha-component (600 aa).

The Flavodoxin-like domain maps to 63-201 (ITLISASQTG…AAQAWRQRVV (139 aa)). Residues 69–74 (SQTGNA), 116–119 (STQG), and 152–161 (LGDTSYEHFC) each bind FMN. In terms of domain architecture, FAD-binding FR-type spans 235–449 (ESPLTATLSV…IEHNDNFRLP (215 aa)). FAD is bound by residues Thr-323, Ala-357, 387 to 390 (RLYS), 405 to 407 (TVG), and 420 to 423 (GGAS). Residues 520-521 (SR), 526-530 (KIYVQ), and Asp-562 contribute to the NADP(+) site. Tyr-600 contributes to the FAD binding site.

It belongs to the NADPH-dependent sulphite reductase flavoprotein subunit CysJ family. The protein in the N-terminal section; belongs to the flavodoxin family. In the C-terminal section; belongs to the flavoprotein pyridine nucleotide cytochrome reductase family. Alpha(8)-beta(8). The alpha component is a flavoprotein, the beta component is a hemoprotein. FAD serves as cofactor. Requires FMN as cofactor.

The catalysed reaction is hydrogen sulfide + 3 NADP(+) + 3 H2O = sulfite + 3 NADPH + 4 H(+). It functions in the pathway sulfur metabolism; hydrogen sulfide biosynthesis; hydrogen sulfide from sulfite (NADPH route): step 1/1. In terms of biological role, component of the sulfite reductase complex that catalyzes the 6-electron reduction of sulfite to sulfide. This is one of several activities required for the biosynthesis of L-cysteine from sulfate. The flavoprotein component catalyzes the electron flow from NADPH -&gt; FAD -&gt; FMN to the hemoprotein component. This is Sulfite reductase [NADPH] flavoprotein alpha-component from Cronobacter sakazakii (strain ATCC BAA-894) (Enterobacter sakazakii).